The sequence spans 229 residues: Peptidase E (229 aa).

Catalysis depends on charge relay system residues serine 120, aspartate 135, and histidine 157.

The protein belongs to the peptidase S51 family.

The protein localises to the cytoplasm. It catalyses the reaction Dipeptidase E catalyzes the hydrolysis of dipeptides Asp-|-Xaa. It does not act on peptides with N-terminal Glu, Asn or Gln, nor does it cleave isoaspartyl peptides.. Functionally, hydrolyzes dipeptides containing N-terminal aspartate residues. May play a role in allowing the cell to use peptide aspartate to spare carbon otherwise required for the synthesis of the aspartate family of amino acids. The sequence is that of Peptidase E from Salmonella newport (strain SL254).